A 354-amino-acid polypeptide reads, in one-letter code: Glycine betaine/proline betaine transport system permease protein ProW (354 aa).

A disordered region spans residues methionine 1–threonine 41. Residues methionine 1–glutamine 99 lie on the Cytoplasmic side of the membrane. Residues alanine 13–threonine 32 show a composition bias toward low complexity. Residues leucine 100–isoleucine 120 form a helical membrane-spanning segment. Position 121 (serine 121) is a topological domain, periplasmic. The chain crosses the membrane as a helical span at residues glycine 122–tryptophan 142. Over serine 143 to threonine 148 the chain is Cytoplasmic. An ABC transmembrane type-1 domain is found at alanine 145–threonine 324. Residues leucine 149 to tryptophan 169 traverse the membrane as a helical segment. The Periplasmic portion of the chain corresponds to leucine 170 to proline 198. The helical transmembrane segment at isoleucine 199 to leucine 219 threads the bilayer. The Cytoplasmic portion of the chain corresponds to proline 220–glutamine 270. The chain crosses the membrane as a helical span at residues threonine 271–glycine 291. The Periplasmic portion of the chain corresponds to glutamine 292 to arginine 300. Residues leucine 301–aspartate 321 traverse the membrane as a helical segment. Residues arginine 322–lysine 354 lie on the Cytoplasmic side of the membrane.

It belongs to the binding-protein-dependent transport system permease family. CysTW subfamily. The complex is composed of two ATP-binding proteins (ProV), two transmembrane proteins (ProW) and a solute-binding protein (ProX).

The protein localises to the cell inner membrane. Functionally, part of the ProU ABC transporter complex involved in glycine betaine and proline betaine uptake. Probably responsible for the translocation of the substrate across the membrane. This is Glycine betaine/proline betaine transport system permease protein ProW from Escherichia coli (strain K12).